Here is a 1470-residue protein sequence, read N- to C-terminus: Guanine nucleotide exchange factor subunit R06F6.8 (1470 aa).

WD repeat units lie at residues 20-58, 68-107, and 472-512; these read STAA…LLCS, ETRG…DEQC, and AYCS…VVGV. 4 disordered regions span residues 673–710, 975–1001, 1017–1045, and 1238–1259; these read QSQN…PMNQ, FFRT…ADSS, RLNK…SKDK, and RSPS…SPSS. Positions 689-707 are enriched in low complexity; sequence SNVSIQSVSTSTTSEPSSP. Polar residues predominate over residues 983 to 1001; it reads AKTSLSRRPTVSSPSADSS. Residues 1028–1045 are compositionally biased toward basic and acidic residues; the sequence is EQKDAPRKDSIGGSSKDK. A helical membrane pass occupies residues 1294–1314; it reads LLLSLFSQTATIDWIFLFCLL. Positions 1385 to 1403 are enriched in basic and acidic residues; sequence SPDNENRKASQKTSADDPK. Residues 1385–1447 are disordered; the sequence is SPDNENRKAS…SADRAHKSVK (63 aa). The span at 1411 to 1424 shows a compositional bias: polar residues; sequence SGSSKLNNSFSNPK. Positions 1431–1447 are enriched in basic and acidic residues; that stretch reads GRRERSRSADRAHKSVK.

Belongs to the RIC1 family. Component of a guanine nucleotide exchange factor (GEF) complex.

It is found in the membrane. Probable component of a guanine nucleotide exchange factor (GEF) that may be required for efficient fusion of endosome-derived vesicles with the Golgi. The chain is Guanine nucleotide exchange factor subunit R06F6.8 from Caenorhabditis elegans.